A 1214-amino-acid chain; its full sequence is MQLKTMPKKKPLSAGRAPLFLFLCQMISALDVPLDPKLLDDLVQPPTITQQSPKDYIIDPRENIVIQCEAKGKPPPSFSWTRNGTHFDIDKDPLVTMKPGSGTLVINIMSEGKAETYEGVYQCTARNERGAAVSNNIVVRPSRSPLWTKERLEPIILRSGQSLVLPCRPPIGLPPAIIFWMDNSFQRLPQSERVSQGLNGDLYFSNVLPEDTREDYICYARFNHTQTIQQKQPISLKVISVDELNDTIAANLSDTEFYGAKSSKERPPTFLTPEGNESHKEELRGNVLSLECIAEGLPTPVIYWIKEDGTLPVNRTFYRNFKKTLQIIHVSEADSGNYQCIAKNALGAVHHTISVTVKAAPYWIVAPHNLVLSPGENGTLICRANGNPKPRISWLTNGVPVEIALDDPSRKIDGDTIMFSNVQESSSAVYQCNASNKYGYLLANAFVNVLAEPPRILTSANTLYQVIANRPALLDCAFFGSPMPTIEWFKGTKGSALHEDIYVLHDNGTLEIPVAQKDSTGTYTCVARNKLGMAKNEVHLEIKDPTRFIKQPGYAVVQRGSKVSFECKVKHDHTLIPTILWLKDNGELPNDERFSVDKDHLVVSDVKDEDGGTYTCAANTTLDSVSASAVLRVVAPTPTPAPIYDVPNPPFDLELTNQLDKSVQLTWTPGDDNNSPITKFIIEYEDAMHEAGLWRHQAEVSGTQTTAQLKLSPYVNYSFRVMAENSIGRSVPSEASEQYLTKAAEPDQNPTAVEGLGTEPDNLVITWKPLNGFQSNGPGLQYKVSWRQKDGDDEWTSVVVANVSKYIVSGTPTFVPYLIKVQALNDVGFAPEPAAVMGHSGEDLPMVAPGNVRVSVVNSTLAEAHWDPVPPKSVRGHLQGYRIYYWKAQSSSKRNRRHIEKKILTFQGSKTHGMLPGLQPYSHYVLNVRVVNGKGEGPASADRGFHTPEGVPSAPSSLKIVNPTLDSLTLEWDPPSHPNGILTEYILKYQPINSTHELGPLVDLKIPANKTRWTLKNLNFSTRYKFYFYAQTSVGSGSQITEEAITTVDEGKKAGILPPDVGAGKAMASRQVDIATQGWFIGLMCAVALLILILLIVCFIRRNKGGKYPVKEKEDAHADPEIQPMKEDDGTFGEYSDAEDHKPLKKGSRTPSDRTVKKEDSDDSLVDYGEGVNGQFNEDGSFIGQYSGKKEKEPAEGNESSEAPSPVNAMNSFV.

A signal peptide spans 1-29 (MQLKTMPKKKPLSAGRAPLFLFLCQMISA). The Extracellular segment spans residues 30 to 1077 (LDVPLDPKLL…ASRQVDIATQ (1048 aa)). Ig-like C2-type domains follow at residues 46-134 (PTIT…AAVS) and 141-235 (PSRS…QPIS). 2 disulfides stabilise this stretch: Cys-68-Cys-123 and Cys-167-Cys-218. N-linked (GlcNAc...) asparagine glycosylation occurs at Asn-83. Asn-223, Asn-245, Asn-251, Asn-276, Asn-314, and Asn-377 each carry an N-linked (GlcNAc...) asparagine glycan. 4 consecutive Ig-like C2-type domains span residues 267-356 (PPTF…ISVT), 361-448 (PYWI…AFVN), 454-541 (PRIL…VHLE), and 545-626 (PTRF…DSVS). A disulfide bridge connects residues Cys-292 and Cys-340. The cysteines at positions 382 and 432 are disulfide-linked. Asn-433 and Asn-507 each carry an N-linked (GlcNAc...) asparagine glycan. 2 disulfides stabilise this stretch: Cys-476–Cys-525 and Cys-567–Cys-616. N-linked (GlcNAc...) asparagine glycosylation is found at Asn-619, Asn-716, Asn-802, Asn-858, Asn-993, Asn-1009, and Asn-1019. 4 Fibronectin type-III domains span residues 649–744 (PPFD…TKAA), 746–843 (PDQN…SGED), 848–950 (APGN…TPEG), and 954–1051 (APSS…VDEG). Residues 1078–1100 (GWFIGLMCAVALLILILLIVCFI) form a helical membrane-spanning segment. Residues 1101–1214 (RRNKGGKYPV…SPVNAMNSFV (114 aa)) are Cytoplasmic-facing. A compositionally biased stretch (basic and acidic residues) spans 1109–1129 (PVKEKEDAHADPEIQPMKEDD). The interval 1109–1214 (PVKEKEDAHA…SPVNAMNSFV (106 aa)) is disordered. The residue at position 1131 (Thr-1131) is a Phosphothreonine. Phosphotyrosine is present on Tyr-1135. Ser-1136 is modified (phosphoserine). The segment covering 1151–1160 (PSDRTVKKED) has biased composition (basic and acidic residues). Ser-1161, Ser-1164, Ser-1181, Ser-1200, Ser-1201, and Ser-1205 each carry phosphoserine. A compositionally biased stretch (polar residues) spans 1198-1214 (NESSEAPSPVNAMNSFV).

Belongs to the immunoglobulin superfamily. L1/neurofascin/NgCAM family. Constituent of a NFASC/NRCAM/ankyrin-G complex. Detected in a complex with CNTN1 and PTPRB. Interacts with MYOC. Interacts with GLDN. Detected in cerebellum Purkinje cells. Detected on nodes of Ranvier and unmyelinated axons in sciatic nerve (at protein level).

The protein resides in the cell membrane. It localises to the cell projection. Its subcellular location is the axon. The protein localises to the secreted. Its function is as follows. Cell adhesion protein that is required for normal responses to cell-cell contacts in brain and in the peripheral nervous system. Plays a role in neurite outgrowth in response to contactin binding. Plays a role in mediating cell-cell contacts between Schwann cells and axons. Plays a role in the formation and maintenance of the nodes of Ranvier on myelinated axons. Nodes of Ranvier contain clustered sodium channels that are crucial for the saltatory propagation of action potentials along myelinated axons. During development, nodes of Ranvier are formed by the fusion of two heminodes. Required for normal clustering of sodium channels at heminodes; not required for the formation of mature nodes with normal sodium channel clusters. Required, together with GLDN, for maintaining NFASC and sodium channel clusters at mature nodes of Ranvier. The sequence is that of Neuronal cell adhesion molecule (Nrcam) from Rattus norvegicus (Rat).